A 545-amino-acid polypeptide reads, in one-letter code: Glucans biosynthesis protein G (545 aa).

Residues 1 to 35 (MIRVSSAVQRHAQKLIVLFSLLFGASLLMSDNGFA) form the signal peptide.

It belongs to the OpgD/OpgG family.

It is found in the periplasm. It functions in the pathway glycan metabolism; osmoregulated periplasmic glucan (OPG) biosynthesis. Its function is as follows. Involved in the biosynthesis of osmoregulated periplasmic glucans (OPGs). The protein is Glucans biosynthesis protein G of Vibrio cholerae serotype O1 (strain ATCC 39541 / Classical Ogawa 395 / O395).